Here is a 529-residue protein sequence, read N- to C-terminus: 1,4-beta-D-glucan cellobiohydrolase xynA (529 aa).

The first 25 residues, 1 to 25, serve as a signal peptide directing secretion; that stretch reads MSALNSFNMYKSALILGSLLATAGA. The catalytic stretch occupies residues 26 to 456; that stretch reads QQIGTYTAET…SDIKVGPFNS (431 aa). N-linked (GlcNAc...) asparagine glycans are attached at residues asparagine 70 and asparagine 219. Glutamate 234 serves as the catalytic Nucleophile. Glutamate 239 functions as the Proton donor in the catalytic mechanism. N-linked (GlcNAc...) asparagine glycosylation is present at asparagine 413. Positions 413–438 are disordered; the sequence is NETGTPGAARGSCPTTSGNPKTVESQ. The span at 425 to 438 shows a compositional bias: polar residues; sequence CPTTSGNPKTVESQ. An N-linked (GlcNAc...) asparagine glycan is attached at asparagine 455. A thr-rich linker region spans residues 457 to 493; that stretch reads TFSGGTSTGGSTTTTASGTTSTKASTTSTSSTSTGTG. A disordered region spans residues 460-491; the sequence is GGTSTGGSTTTTASGTTSTKASTTSTSSTSTG. A CBM1 domain is found at 493 to 529; it reads GVAAHWGQCGGQGWTGPTTCASGTTCTVVNPYYSQCL. Cystine bridges form between cysteine 501–cysteine 518 and cysteine 512–cysteine 528.

This sequence belongs to the glycosyl hydrolase 7 (cellulase C) family.

The protein resides in the secreted. The enzyme catalyses Hydrolysis of (1-&gt;4)-beta-D-glucosidic linkages in cellulose and cellotetraose, releasing cellobiose from the non-reducing ends of the chains.. With respect to regulation, cellobiose inhibits xynA at high concentrations. In terms of biological role, the biological conversion of cellulose to glucose generally requires three types of hydrolytic enzymes: (1) Endoglucanases which cut internal beta-1,4-glucosidic bonds; (2) Exocellobiohydrolases that cut the disaccharide cellobiose from the non-reducing end of the cellulose polymer chain; (3) Beta-1,4-glucosidases which hydrolyze the cellobiose and other short cello-oligosaccharides to glucose. The protein is 1,4-beta-D-glucan cellobiohydrolase xynA (xynA) of Talaromyces funiculosus (Fruitlet core rot fungus).